A 294-amino-acid polypeptide reads, in one-letter code: Acetyl-coenzyme A carboxylase carboxyl transferase subunit beta (294 aa).

The 268-residue stretch at 27–294 folds into the CoA carboxyltransferase N-terminal domain; it reads LWHKCPSCDA…PSPVALPVTA (268 aa). The Zn(2+) site is built by cysteine 31, cysteine 34, cysteine 50, and cysteine 53. A C4-type zinc finger spans residues 31 to 53; that stretch reads CPSCDAVLYRPELEKTLDVCPKC.

The protein belongs to the AccD/PCCB family. In terms of assembly, acetyl-CoA carboxylase is a heterohexamer composed of biotin carboxyl carrier protein (AccB), biotin carboxylase (AccC) and two subunits each of ACCase subunit alpha (AccA) and ACCase subunit beta (AccD). Zn(2+) serves as cofactor.

Its subcellular location is the cytoplasm. It catalyses the reaction N(6)-carboxybiotinyl-L-lysyl-[protein] + acetyl-CoA = N(6)-biotinyl-L-lysyl-[protein] + malonyl-CoA. Its pathway is lipid metabolism; malonyl-CoA biosynthesis; malonyl-CoA from acetyl-CoA: step 1/1. Component of the acetyl coenzyme A carboxylase (ACC) complex. Biotin carboxylase (BC) catalyzes the carboxylation of biotin on its carrier protein (BCCP) and then the CO(2) group is transferred by the transcarboxylase to acetyl-CoA to form malonyl-CoA. The sequence is that of Acetyl-coenzyme A carboxylase carboxyl transferase subunit beta from Ectopseudomonas mendocina (strain ymp) (Pseudomonas mendocina).